Consider the following 408-residue polypeptide: Protein SPATA31F3 (408 aa).

A helical membrane pass occupies residues V11–V31. Residues Q51–E71 form a disordered region. Position 152 is a phosphoserine (S152). 2 disordered regions span residues T297–A316 and L351–S408. Positions L351–T392 are enriched in polar residues.

This sequence belongs to the SPATA31 family.

Its subcellular location is the membrane. This Bos taurus (Bovine) protein is Protein SPATA31F3 (SPATA31F3).